The chain runs to 245 residues: MARRWSGETRLGLVRRARRMNRALAQAFPHVYCELDFTSPLELTVATILSAQSTDKRVNLTTPAVFARYRSALDYMQADRAELENFIRPTGFFRNKAASLIRLGQALVERFDGEVPSTMVDLFTLPGVGRKTANVILGNAFGIPGITVDTHFGRLVRRWRWTAEEDPVKVEHAVGELIERDQWTLLSHRVIFHGRRVCHARKPACGVCVLAKDCPSFGLGPTEPLLAAPLVQGPEAGHLLALAGL.

In terms of domain architecture, HhH spans 119 to 138 (MVDLFTLPGVGRKTANVILG). Positions 198, 205, 208, and 214 each coordinate [4Fe-4S] cluster.

This sequence belongs to the Nth/MutY family. It depends on [4Fe-4S] cluster as a cofactor.

It catalyses the reaction 2'-deoxyribonucleotide-(2'-deoxyribose 5'-phosphate)-2'-deoxyribonucleotide-DNA = a 3'-end 2'-deoxyribonucleotide-(2,3-dehydro-2,3-deoxyribose 5'-phosphate)-DNA + a 5'-end 5'-phospho-2'-deoxyribonucleoside-DNA + H(+). In terms of biological role, DNA repair enzyme that has both DNA N-glycosylase activity and AP-lyase activity. The DNA N-glycosylase activity releases various damaged pyrimidines from DNA by cleaving the N-glycosidic bond, leaving an AP (apurinic/apyrimidinic) site. The AP-lyase activity cleaves the phosphodiester bond 3' to the AP site by a beta-elimination, leaving a 3'-terminal unsaturated sugar and a product with a terminal 5'-phosphate. This is Endonuclease III from Mycobacterium leprae (strain TN).